The primary structure comprises 153 residues: Phosphoribosyl-AMP cyclohydrolase (153 aa).

A Mg(2+)-binding site is contributed by D93. C94 lines the Zn(2+) pocket. Residues D95 and D97 each contribute to the Mg(2+) site. Zn(2+)-binding residues include C112 and C119.

Belongs to the PRA-CH family. Homodimer. Mg(2+) is required as a cofactor. It depends on Zn(2+) as a cofactor.

The protein localises to the cytoplasm. The enzyme catalyses 1-(5-phospho-beta-D-ribosyl)-5'-AMP + H2O = 1-(5-phospho-beta-D-ribosyl)-5-[(5-phospho-beta-D-ribosylamino)methylideneamino]imidazole-4-carboxamide. It functions in the pathway amino-acid biosynthesis; L-histidine biosynthesis; L-histidine from 5-phospho-alpha-D-ribose 1-diphosphate: step 3/9. Catalyzes the hydrolysis of the adenine ring of phosphoribosyl-AMP. The polypeptide is Phosphoribosyl-AMP cyclohydrolase (Mesorhizobium japonicum (strain LMG 29417 / CECT 9101 / MAFF 303099) (Mesorhizobium loti (strain MAFF 303099))).